A 159-amino-acid polypeptide reads, in one-letter code: Small ribosomal subunit protein uS7 (159 aa).

It belongs to the universal ribosomal protein uS7 family. As to quaternary structure, part of the 30S ribosomal subunit. Contacts proteins S9 and S11.

One of the primary rRNA binding proteins, it binds directly to 16S rRNA where it nucleates assembly of the head domain of the 30S subunit. Is located at the subunit interface close to the decoding center, probably blocks exit of the E-site tRNA. The polypeptide is Small ribosomal subunit protein uS7 (Sulfurihydrogenibium sp. (strain YO3AOP1)).